The sequence spans 602 residues: Proteasome-associated ATPase (602 aa).

Positions 1-13 (MQHDLPGGRHDEA) are enriched in basic and acidic residues. The tract at residues 1–33 (MQHDLPGGRHDEADSSETGGAGTTENPSSEQAR) is disordered. The span at 23-32 (TTENPSSEQA) shows a compositional bias: polar residues. Residues 28-103 (SSEQARQIRF…LREEVDRLAQ (76 aa)) are a coiled coil. Residue 291 to 296 (GCGKTL) coordinates ATP. The segment at 601-602 (YL) is docks into pockets in the proteasome alpha-ring.

This sequence belongs to the AAA ATPase family. In terms of assembly, homohexamer. Assembles into a hexameric ring structure that caps the 20S proteasome core. Strongly interacts with the prokaryotic ubiquitin-like protein Pup through a hydrophobic interface; the interacting region of ARC lies in its N-terminal coiled-coil domain. There is one Pup binding site per ARC hexamer ring. Upon ATP-binding, the C-terminus of ARC interacts with the alpha-rings of the proteasome core, possibly by binding to the intersubunit pockets.

The protein operates within protein degradation; proteasomal Pup-dependent pathway. ATPase which is responsible for recognizing, binding, unfolding and translocation of pupylated proteins into the bacterial 20S proteasome core particle. May be essential for opening the gate of the 20S proteasome via an interaction with its C-terminus, thereby allowing substrate entry and access to the site of proteolysis. Thus, the C-termini of the proteasomal ATPase may function like a 'key in a lock' to induce gate opening and therefore regulate proteolysis. This Saccharomonospora viridis (strain ATCC 15386 / DSM 43017 / JCM 3036 / CCUG 5913 / NBRC 12207 / NCIMB 9602 / P101) (Thermoactinomyces viridis) protein is Proteasome-associated ATPase.